A 629-amino-acid chain; its full sequence is Methionine--tRNA ligase (629 aa).

Residues 10–20 (YYVNSEPHIGS) carry the 'HIGH' region motif. Positions 125, 128, 146, and 149 each coordinate Zn(2+). Positions 297–301 (KISKS) match the 'KMSKS' region motif. Lys-300 is an ATP binding site. A tRNA-binding domain is found at 529–629 (DFSKVDLRIA…GEITPGAKVS (101 aa)).

Belongs to the class-I aminoacyl-tRNA synthetase family. MetG type 2A subfamily. In terms of assembly, homodimer. The cofactor is Zn(2+).

Its subcellular location is the cytoplasm. The enzyme catalyses tRNA(Met) + L-methionine + ATP = L-methionyl-tRNA(Met) + AMP + diphosphate. Functionally, is required not only for elongation of protein synthesis but also for the initiation of all mRNA translation through initiator tRNA(fMet) aminoacylation. The sequence is that of Methionine--tRNA ligase (metG) from Thermotoga maritima (strain ATCC 43589 / DSM 3109 / JCM 10099 / NBRC 100826 / MSB8).